Reading from the N-terminus, the 253-residue chain is MLKTRIIPCLDVADGRVVKGVNFVDLRDAGDPVDAAIAYDAAGADELCFLDITATHENRATMFDVVTRTAEHCYIPLTVGGGVRSVSDVRALLLAGADKVSFNSAAVANPDVVAQAADQFGSQCIVVAIDAKTTSPGKWEIFTHGGRKPTGIDAVAFAQTVTAKGAGEILLTSMDRDGTRAGFNLPLTRAISDAVNVPVIASGGVGTLDHLVEGVTKGGASAVLAASIFHFGDYTIAQAKQHMSDAGIPMRLI.

Catalysis depends on residues D11 and D130.

This sequence belongs to the HisA/HisF family. Heterodimer of HisH and HisF.

Its subcellular location is the cytoplasm. The enzyme catalyses 5-[(5-phospho-1-deoxy-D-ribulos-1-ylimino)methylamino]-1-(5-phospho-beta-D-ribosyl)imidazole-4-carboxamide + L-glutamine = D-erythro-1-(imidazol-4-yl)glycerol 3-phosphate + 5-amino-1-(5-phospho-beta-D-ribosyl)imidazole-4-carboxamide + L-glutamate + H(+). It participates in amino-acid biosynthesis; L-histidine biosynthesis; L-histidine from 5-phospho-alpha-D-ribose 1-diphosphate: step 5/9. IGPS catalyzes the conversion of PRFAR and glutamine to IGP, AICAR and glutamate. The HisF subunit catalyzes the cyclization activity that produces IGP and AICAR from PRFAR using the ammonia provided by the HisH subunit. The sequence is that of Imidazole glycerol phosphate synthase subunit HisF from Roseobacter denitrificans (strain ATCC 33942 / OCh 114) (Erythrobacter sp. (strain OCh 114)).